Reading from the N-terminus, the 294-residue chain is 4-hydroxy-tetrahydrodipicolinate synthase (294 aa).

Thr-44 contributes to the pyruvate binding site. Tyr-132 serves as the catalytic Proton donor/acceptor. The active-site Schiff-base intermediate with substrate is the Lys-161. A pyruvate-binding site is contributed by Ile-203.

Belongs to the DapA family. Homotetramer; dimer of dimers.

Its subcellular location is the cytoplasm. The catalysed reaction is L-aspartate 4-semialdehyde + pyruvate = (2S,4S)-4-hydroxy-2,3,4,5-tetrahydrodipicolinate + H2O + H(+). Its pathway is amino-acid biosynthesis; L-lysine biosynthesis via DAP pathway; (S)-tetrahydrodipicolinate from L-aspartate: step 3/4. In terms of biological role, catalyzes the condensation of (S)-aspartate-beta-semialdehyde [(S)-ASA] and pyruvate to 4-hydroxy-tetrahydrodipicolinate (HTPA). This is 4-hydroxy-tetrahydrodipicolinate synthase from Aquifex aeolicus (strain VF5).